The sequence spans 104 residues: Large ribosomal subunit protein uL24 (104 aa).

The segment covering 85 to 96 (IKRELGAKEKAR) has biased composition (basic and acidic residues). The disordered stretch occupies residues 85–104 (IKRELGAKEKARADRRKTAK).

The protein belongs to the universal ribosomal protein uL24 family. As to quaternary structure, part of the 50S ribosomal subunit.

In terms of biological role, one of two assembly initiator proteins, it binds directly to the 5'-end of the 23S rRNA, where it nucleates assembly of the 50S subunit. One of the proteins that surrounds the polypeptide exit tunnel on the outside of the subunit. In Anaeromyxobacter sp. (strain Fw109-5), this protein is Large ribosomal subunit protein uL24.